The sequence spans 125 residues: Basic leucine zipper transcriptional factor ATF-like (125 aa).

Low complexity predominate over residues 1-14 (MPHSSDSSDSSFSR). Residues 1 to 59 (MPHSSDSSDSSFSRSPPPGKQDSSDDVRKVQRREKNRIAAQKSRQRQTQKADTLHLESE) form a disordered region. The bZIP domain occupies 26 to 89 (DVRKVQRREK…KYFTSVLSSH (64 aa)). The interval 28–50 (RKVQRREKNRIAAQKSRQRQTQK) is basic motif. Serine 43 carries the post-translational modification Phosphoserine. Threonine 48 bears the Phosphothreonine mark. The segment at 54–75 (LHLESEDLEKQNAALRKEIKQL) is leucine-zipper.

Belongs to the bZIP family. Heterodimer; mainly heterodimerizes with JUNB. The BATF-JUNB heterodimer interacts with IRF4 and IRF8. Interacts (via bZIP domain) with IRF4 and IRF8; the interaction is direct. Also forms heterodimers with JUN and JUND. Interacts with IFI35. Phosphorylated on serine and threonine residues and at least one tyrosine residue. Phosphorylation at Ser-43 inhibit DNA binding activity and transforms it as a negative regulator of AP-1 mediated transcription. As to expression, detected in postnatal and adult lymphoid tissues such as thymus, spleen and lymph nodes. In thymus most concentrated expression is found in the immediate cortical layer. Differentially expressed during T-cell development in thymus. Highly expressed in Th17, Th1 and Th2 cells and in activated B-cells.

The protein resides in the nucleus. It is found in the cytoplasm. In terms of biological role, AP-1 family transcription factor that controls the differentiation of lineage-specific cells in the immune system: specifically mediates the differentiation of T-helper 17 cells (Th17), follicular T-helper cells (TfH), CD8(+) dendritic cells and class-switch recombination (CSR) in B-cells. Acts via the formation of a heterodimer with JUNB that recognizes and binds DNA sequence 5'-TGA[CG]TCA-3'. The BATF-JUNB heterodimer also forms a complex with IRF4 (or IRF8) in immune cells, leading to recognition of AICE sequence (5'-TGAnTCA/GAAA-3'), an immune-specific regulatory element, followed by cooperative binding of BATF and IRF4 (or IRF8) and activation of genes. Controls differentiation of T-helper cells producing interleukin-17 (Th17 cells) by binding to Th17-associated gene promoters: regulates expression of the transcription factor RORC itself and RORC target genes such as IL17 (IL17A or IL17B). Also involved in differentiation of follicular T-helper cells (TfH) by directing expression of BCL6 and MAF. In B-cells, involved in class-switch recombination (CSR) by controlling the expression of both AICDA and of germline transcripts of the intervening heavy-chain region and constant heavy-chain region (I(H)-C(H)). Following infection, can participate in CD8(+) dendritic cell differentiation via interaction with IRF4 and IRF8 to mediate cooperative gene activation. Regulates effector CD8(+) T-cell differentiation by regulating expression of SIRT1. Following DNA damage, part of a differentiation checkpoint that limits self-renewal of hematopoietic stem cells (HSCs): up-regulated by STAT3, leading to differentiation of HSCs, thereby restricting self-renewal of HSCs. The sequence is that of Basic leucine zipper transcriptional factor ATF-like (Batf) from Mus musculus (Mouse).